Reading from the N-terminus, the 159-residue chain is uncharacterized protein (159 aa).

Residues His44, His124, and His128 each coordinate a divalent metal cation.

This sequence belongs to the DinB family.

This is an uncharacterized protein from Bacillus subtilis (strain 168).